The sequence spans 211 residues: dITP/XTP pyrophosphatase (211 aa).

Residue 13 to 18 (THNPGK) coordinates substrate. Positions 45 and 74 each coordinate Mg(2+). Aspartate 74 (proton acceptor) is an active-site residue. Substrate contacts are provided by residues serine 75, 160 to 163 (FGYD), lysine 183, and 195 to 196 (HR).

It belongs to the HAM1 NTPase family. In terms of assembly, homodimer. The cofactor is Mg(2+).

It catalyses the reaction XTP + H2O = XMP + diphosphate + H(+). The enzyme catalyses dITP + H2O = dIMP + diphosphate + H(+). The catalysed reaction is ITP + H2O = IMP + diphosphate + H(+). Functionally, pyrophosphatase that catalyzes the hydrolysis of nucleoside triphosphates to their monophosphate derivatives, with a high preference for the non-canonical purine nucleotides XTP (xanthosine triphosphate), dITP (deoxyinosine triphosphate) and ITP. Seems to function as a house-cleaning enzyme that removes non-canonical purine nucleotides from the nucleotide pool, thus preventing their incorporation into DNA/RNA and avoiding chromosomal lesions. The chain is dITP/XTP pyrophosphatase from Bradyrhizobium diazoefficiens (strain JCM 10833 / BCRC 13528 / IAM 13628 / NBRC 14792 / USDA 110).